The following is a 156-amino-acid chain: MPRKGPVPKRDVLPDPLYKSKLVTRLINQIMVDGKRGKAQKILYNAFELVAERSGQNAMEVFEQAMKNVMPVLEVRARRVGGSNYQVPVEVRPERRQALGLRYIVNYSRLRGEKTMEERLANEILDASNNTGAAVKRREDMHKMAEANKAFAHYRW.

Belongs to the universal ribosomal protein uS7 family. Part of the 30S ribosomal subunit. Contacts proteins S9 and S11.

One of the primary rRNA binding proteins, it binds directly to 16S rRNA where it nucleates assembly of the head domain of the 30S subunit. Is located at the subunit interface close to the decoding center, probably blocks exit of the E-site tRNA. The polypeptide is Small ribosomal subunit protein uS7 (Oceanobacillus iheyensis (strain DSM 14371 / CIP 107618 / JCM 11309 / KCTC 3954 / HTE831)).